The sequence spans 213 residues: tRNA (guanine-N(7)-)-methyltransferase (213 aa).

4 residues coordinate S-adenosyl-L-methionine: D44, E69, N96, and D119. D119 is a catalytic residue. Residues K123 and D155 each contribute to the substrate site.

Belongs to the class I-like SAM-binding methyltransferase superfamily. TrmB family.

The catalysed reaction is guanosine(46) in tRNA + S-adenosyl-L-methionine = N(7)-methylguanosine(46) in tRNA + S-adenosyl-L-homocysteine. The protein operates within tRNA modification; N(7)-methylguanine-tRNA biosynthesis. Functionally, catalyzes the formation of N(7)-methylguanine at position 46 (m7G46) in tRNA. The protein is tRNA (guanine-N(7)-)-methyltransferase of Thermosynechococcus vestitus (strain NIES-2133 / IAM M-273 / BP-1).